Consider the following 258-residue polypeptide: MAQVHPTAVVHPDARLHETVEVGPYSIIGPQVTIGAGSRVGPHVVIEGRTTLGERNRIFQFASVGADPQDLKYAGEDTELVLGDDNQIREFVSLHKGTAGGGGATRVGSGNLFMANCHVAHDCVVGNGCRIGNGSALAGHVTMEDHVIISGLAAVHQFTRLGKHAFISGGAMVTMDIPPYATAQGDRAELVGLNTVGLERSGFSKEQIERVKEAHRILFRSKLTLQEAMVRLRAELAGHSEVDHLIQFIQQSKRGLTR.

The protein belongs to the transferase hexapeptide repeat family. LpxA subfamily. Homotrimer.

Its subcellular location is the cytoplasm. It catalyses the reaction a (3R)-hydroxyacyl-[ACP] + UDP-N-acetyl-alpha-D-glucosamine = a UDP-3-O-[(3R)-3-hydroxyacyl]-N-acetyl-alpha-D-glucosamine + holo-[ACP]. Its pathway is glycolipid biosynthesis; lipid IV(A) biosynthesis; lipid IV(A) from (3R)-3-hydroxytetradecanoyl-[acyl-carrier-protein] and UDP-N-acetyl-alpha-D-glucosamine: step 1/6. Its function is as follows. Involved in the biosynthesis of lipid A, a phosphorylated glycolipid that anchors the lipopolysaccharide to the outer membrane of the cell. This is Acyl-[acyl-carrier-protein]--UDP-N-acetylglucosamine O-acyltransferase from Myxococcus xanthus (strain DK1622).